The sequence spans 91 residues: Small ribosomal subunit protein uS15 (91 aa).

The protein belongs to the universal ribosomal protein uS15 family. In terms of assembly, part of the 30S ribosomal subunit. Forms a bridge to the 50S subunit in the 70S ribosome, contacting the 23S rRNA.

Functionally, one of the primary rRNA binding proteins, it binds directly to 16S rRNA where it helps nucleate assembly of the platform of the 30S subunit by binding and bridging several RNA helices of the 16S rRNA. Its function is as follows. Forms an intersubunit bridge (bridge B4) with the 23S rRNA of the 50S subunit in the ribosome. This Rickettsia typhi (strain ATCC VR-144 / Wilmington) protein is Small ribosomal subunit protein uS15.